Here is a 457-residue protein sequence, read N- to C-terminus: tRNA-2-methylthio-N(6)-dimethylallyladenosine synthase (457 aa).

Residues 2–119 (KKVFIKTFGC…LPELIDARRR (118 aa)) form the MTTase N-terminal domain. Residues Cys-11, Cys-48, Cys-82, Cys-156, Cys-160, and Cys-163 each coordinate [4Fe-4S] cluster. In terms of domain architecture, Radical SAM core spans 142–375 (RVEGPSAFVS…QATIDANMAR (234 aa)). One can recognise a TRAM domain in the interval 378-448 (EGMVGSVQRI…PHSLRGDVVE (71 aa)).

The protein belongs to the methylthiotransferase family. MiaB subfamily. In terms of assembly, monomer. Requires [4Fe-4S] cluster as cofactor.

It localises to the cytoplasm. It catalyses the reaction N(6)-dimethylallyladenosine(37) in tRNA + (sulfur carrier)-SH + AH2 + 2 S-adenosyl-L-methionine = 2-methylsulfanyl-N(6)-dimethylallyladenosine(37) in tRNA + (sulfur carrier)-H + 5'-deoxyadenosine + L-methionine + A + S-adenosyl-L-homocysteine + 2 H(+). In terms of biological role, catalyzes the methylthiolation of N6-(dimethylallyl)adenosine (i(6)A), leading to the formation of 2-methylthio-N6-(dimethylallyl)adenosine (ms(2)i(6)A) at position 37 in tRNAs that read codons beginning with uridine. In Ralstonia nicotianae (strain ATCC BAA-1114 / GMI1000) (Ralstonia solanacearum), this protein is tRNA-2-methylthio-N(6)-dimethylallyladenosine synthase.